A 287-amino-acid polypeptide reads, in one-letter code: Elongation factor Ts (287 aa).

Residues 80–83 form an involved in Mg(2+) ion dislocation from EF-Tu region; that stretch reads TDFL.

Belongs to the EF-Ts family.

The protein localises to the cytoplasm. Its function is as follows. Associates with the EF-Tu.GDP complex and induces the exchange of GDP to GTP. It remains bound to the aminoacyl-tRNA.EF-Tu.GTP complex up to the GTP hydrolysis stage on the ribosome. The protein is Elongation factor Ts of Ectopseudomonas mendocina (strain ymp) (Pseudomonas mendocina).